The primary structure comprises 141 residues: Large ribosomal subunit protein uL11 (141 aa).

The protein belongs to the universal ribosomal protein uL11 family. In terms of assembly, part of the ribosomal stalk of the 50S ribosomal subunit. Interacts with L10 and the large rRNA to form the base of the stalk. L10 forms an elongated spine to which L12 dimers bind in a sequential fashion forming a multimeric L10(L12)X complex. Post-translationally, one or more lysine residues are methylated.

Functionally, forms part of the ribosomal stalk which helps the ribosome interact with GTP-bound translation factors. In Petrotoga mobilis (strain DSM 10674 / SJ95), this protein is Large ribosomal subunit protein uL11.